Here is a 209-residue protein sequence, read N- to C-terminus: A-type ATP synthase subunit D (209 aa).

The protein belongs to the V-ATPase D subunit family. In terms of assembly, has multiple subunits with at least A(3), B(3), C, D, E, F, H, I and proteolipid K(x).

The protein localises to the cell membrane. In terms of biological role, component of the A-type ATP synthase that produces ATP from ADP in the presence of a proton gradient across the membrane. In Sulfolobus acidocaldarius (strain ATCC 33909 / DSM 639 / JCM 8929 / NBRC 15157 / NCIMB 11770), this protein is A-type ATP synthase subunit D.